We begin with the raw amino-acid sequence, 195 residues long: Large ribosomal subunit protein eL6 (195 aa).

Residues Ser105 and Ser115 each carry the phosphoserine modification.

Belongs to the eukaryotic ribosomal protein eL6 family. As to quaternary structure, component of the large ribosomal subunit (LSU). Mature yeast ribosomes consist of a small (40S) and a large (60S) subunit. The 40S small subunit contains 1 molecule of ribosomal RNA (18S rRNA) and at least 33 different proteins. The large 60S subunit contains 3 rRNA molecules (25S, 5.8S and 5S rRNA) and at least 46 different proteins.

Its subcellular location is the cytoplasm. It localises to the nucleus. It is found in the nucleolus. Its function is as follows. Component of the ribosome, a large ribonucleoprotein complex responsible for the synthesis of proteins in the cell. The small ribosomal subunit (SSU) binds messenger RNAs (mRNAs) and translates the encoded message by selecting cognate aminoacyl-transfer RNA (tRNA) molecules. The large subunit (LSU) contains the ribosomal catalytic site termed the peptidyl transferase center (PTC), which catalyzes the formation of peptide bonds, thereby polymerizing the amino acids delivered by tRNAs into a polypeptide chain. The nascent polypeptides leave the ribosome through a tunnel in the LSU and interact with protein factors that function in enzymatic processing, targeting, and the membrane insertion of nascent chains at the exit of the ribosomal tunnel. The protein is Large ribosomal subunit protein eL6 (rpl6) of Schizosaccharomyces pombe (strain 972 / ATCC 24843) (Fission yeast).